An 81-amino-acid chain; its full sequence is MALAVLRLALLLLAVTFAGPLFRRFSKYKTPFCARYQLPGCPRDFNPVCGTDMITYPNECTLCMKIRESGQNIKILRRGPC.

Positions M1–L21 are cleaved as a signal peptide. Positions K27 to C81 constitute a Kazal-like domain. 3 cysteine pairs are disulfide-bonded: C33–C63, C41–C60, and C49–C81.

More abundant in epididymis than in testis.

Its subcellular location is the secreted. The protein resides in the cytoplasmic vesicle. It localises to the secretory vesicle. The protein localises to the acrosome. In terms of biological role, strong inhibitor of acrosin in male and/or female genital tract. Also inhibits trypsin. Its function is as follows. As a strong inhibitor of acrosin, it is required for normal spermiogenesis. It probably hinders premature activation of proacrosin and other proteases, thus preventing the cascade of events leading to spermiogenesis defects. May be involved in the regulation of serine protease-dependent germ cell apoptosis. It also inhibits trypsin. The sequence is that of Serine protease inhibitor Kazal-type 2 (SPINK2) from Macaca fascicularis (Crab-eating macaque).